The sequence spans 551 residues: RCC1 and BTB domain-containing protein 2 (551 aa).

RCC1 repeat units lie at residues 64–115, 117–169, 171–222, 223–274, 276–326, and 328–382; these read NDEI…VLAT, DGEV…VLTS, GEVF…AVVD, TGEV…VLTD, GQIY…AAKT, and GGHV…TVAE. A BTB domain is found at 394–457; that stretch reads ADLKFLVDGK…LYTDNISLSP (64 aa).

In terms of tissue distribution, expressed in testis and heart (at protein level).

It is found in the cytoplasmic vesicle. It localises to the secretory vesicle. The protein resides in the acrosome. This chain is RCC1 and BTB domain-containing protein 2 (Rcbtb2), found in Mus musculus (Mouse).